Reading from the N-terminus, the 357-residue chain is Peptide chain release factor 1 (357 aa).

Position 234 is an N5-methylglutamine (Gln-234). The tract at residues 282 to 313 (DSKKQEQRSNNRKQQVGSGDRSERIRTYNFPQ) is disordered.

Belongs to the prokaryotic/mitochondrial release factor family. Post-translationally, methylated by PrmC. Methylation increases the termination efficiency of RF1.

The protein resides in the cytoplasm. In terms of biological role, peptide chain release factor 1 directs the termination of translation in response to the peptide chain termination codons UAG and UAA. The protein is Peptide chain release factor 1 of Borreliella afzelii (strain PKo) (Borrelia afzelii).